The sequence spans 230 residues: 7-cyano-7-deazaguanine synthase (230 aa).

Residue 8 to 18 (FSGGQDSTTCL) participates in ATP binding. Cys-187, Cys-196, Cys-199, and Cys-202 together coordinate Zn(2+).

The protein belongs to the QueC family. Requires Zn(2+) as cofactor.

The catalysed reaction is 7-carboxy-7-deazaguanine + NH4(+) + ATP = 7-cyano-7-deazaguanine + ADP + phosphate + H2O + H(+). The protein operates within purine metabolism; 7-cyano-7-deazaguanine biosynthesis. In terms of biological role, catalyzes the ATP-dependent conversion of 7-carboxy-7-deazaguanine (CDG) to 7-cyano-7-deazaguanine (preQ(0)). The protein is 7-cyano-7-deazaguanine synthase of Shewanella amazonensis (strain ATCC BAA-1098 / SB2B).